Consider the following 213-residue polypeptide: MNIMLLGAPGCGKGTQAEQLVNKLNFIQVSTGDLMRKEISLNTRLGLKCQEYMNAGKYVPDQIVNQIVSQFLKNTNDKLIFDGYPRTLEQAKSLEQMLDLYNKKIDYVFYIDVNDQILIKRITNRLVCPLCKASFNLETRKPKQEGLCDFDNTKLVKRSDDSLDKVQIRLQTYKEQTLPLIDYFKTNSKFIEIKADDLSAEQVFNQIKGELKI.

Residue 10-15 (GCGKGT) coordinates ATP. Residues 30–59 (STGDLMRKEISLNTRLGLKCQEYMNAGKYV) form an NMP region. AMP contacts are provided by residues Thr31, Arg36, 57 to 59 (KYV), 83 to 86 (GYPR), and Gln90. The interval 124-161 (NRLVCPLCKASFNLETRKPKQEGLCDFDNTKLVKRSDD) is LID. Residue Arg125 participates in ATP binding. Zn(2+) is bound by residues Cys128 and Cys131. ATP is bound at residue 134–135 (SF). Positions 148 and 151 each coordinate Zn(2+). AMP is bound by residues Arg158 and Arg169. Asp197 contacts ATP.

This sequence belongs to the adenylate kinase family. Monomer.

The protein localises to the cytoplasm. It catalyses the reaction AMP + ATP = 2 ADP. Its pathway is purine metabolism; AMP biosynthesis via salvage pathway; AMP from ADP: step 1/1. Catalyzes the reversible transfer of the terminal phosphate group between ATP and AMP. Plays an important role in cellular energy homeostasis and in adenine nucleotide metabolism. This is Adenylate kinase from Mycoplasma mycoides subsp. mycoides SC (strain CCUG 32753 / NCTC 10114 / PG1).